We begin with the raw amino-acid sequence, 175 residues long: Bifunctional protein PyrR (175 aa).

Substrate-binding positions include 40–41, 102–110, R135, and V159; these read TR and DDVLYTGRT. The PRPP-binding motif lies at 98–110; sequence VIIIDDVLYTGRT.

The protein belongs to the purine/pyrimidine phosphoribosyltransferase family. PyrR subfamily. In terms of assembly, homodimer and homohexamer; in equilibrium.

The enzyme catalyses UMP + diphosphate = 5-phospho-alpha-D-ribose 1-diphosphate + uracil. Functionally, regulates transcriptional attenuation of the pyrimidine nucleotide (pyr) operon by binding in a uridine-dependent manner to specific sites on pyr mRNA. This disrupts an antiterminator hairpin in the RNA and favors formation of a downstream transcription terminator, leading to a reduced expression of downstream genes. In terms of biological role, also displays a weak uracil phosphoribosyltransferase activity which is not physiologically significant. The polypeptide is Bifunctional protein PyrR (Staphylococcus aureus (strain MSSA476)).